We begin with the raw amino-acid sequence, 299 residues long: Protease HtpX homolog (299 aa).

2 consecutive transmembrane segments (helical) span residues 14–34 and 39–59; these read WLLL…VGYL and GFGG…TMIF. His-143 is a Zn(2+) binding site. Residue Glu-144 is part of the active site. Residue His-147 participates in Zn(2+) binding. 2 consecutive transmembrane segments (helical) span residues 153–173 and 198–218; these read IRIS…AVMA and IILL…ATLV. Glu-227 is a binding site for Zn(2+).

This sequence belongs to the peptidase M48B family. Zn(2+) serves as cofactor.

The protein resides in the cell membrane. This Streptococcus thermophilus (strain CNRZ 1066) protein is Protease HtpX homolog.